The following is a 2120-amino-acid chain: Alpha-tectorin (2120 aa).

Residues 1 to 24 form the signal peptide; that stretch reads MNTRSLLSAWAALLVVTVRHRAHA. N-linked (GlcNAc...) asparagine glycans are attached at residues N34, N215, N258, N277, N445, and N496. In terms of domain architecture, NIDO spans 98–252; that stretch reads PFCGDVANGI…GRWAFKIDGR (155 aa). A VWFC domain is found at 260-312; the sequence is SLRGQFLHQGEIFWENSNCSTKCRCLDFNNEIFCQEMLAPFETVEPKIKFFQC. Residues 317–490 form the VWFD 1 domain; sequence TACVVFGDPH…RVPHPERKCS (174 aa). 2 disulfides stabilise this stretch: C319–C451 and C341–C489. A TIL 1 domain is found at 578 to 620; sequence PGHSHYSGCASGCPATCSDLTAPLRCTAPCPEGCECDDGHVLS. N-linked (GlcNAc...) asparagine glycans are attached at residues N666, N792, N822, N834, N877, N899, N907, and N928. Positions 690–865 constitute a VWFD 2 domain; sequence GLCSVGQNQV…SWTTFDEICN (176 aa). A disulfide bridge connects residues C692 and C828. Residues 963–1013 enclose the TIL 2 domain; that stretch reads CPENSHFEECMSCVETCETLATGCCMDTCTEGCQCDEGFALRSPCVPRGEC. N1025, N1041, N1207, and N1337 each carry an N-linked (GlcNAc...) asparagine glycan. Residues 1066 to 1250 form the VWFD 3 domain; it reads ASCIVSGYGH…SWAKRDTFCR (185 aa). 2 cysteine pairs are disulfide-bonded: C1068–C1213 and C1090–C1249. The region spanning 1345–1398 is the TIL 3 domain; the sequence is CPPNSHYESCVSLCQPRCAAIRLKSDCGHYCVEGCQCDPGYVLNGKSCILPQNC. One can recognise a VWFD 4 domain in the interval 1458-1633; that stretch reads SFCLAAGGGV…KTNGMQKSCN (176 aa). Disulfide bonds link C1460-C1594, C1482-C1632, C1684-C1742, C1708-C1751, C1753-C1785, C1773-C1865, and C1804-C1824. N1511, N1537, N1723, N1739, N1761, N1818, N1831, N1847, N1887, and N1906 each carry an N-linked (GlcNAc...) asparagine glycan. The ZP domain maps to 1772 to 2026; that stretch reads TCKAAQMEVS…YSCKINCPQH (255 aa). 3 disulfides stabilise this stretch: C1947–C2007, C1968–C2023, and C2012–C2019. N2058 is lipidated: GPI-anchor amidated asparagine. The propeptide at 2059-2120 is removed in mature form; the sequence is GGCEQICTSQ…LWAALHDPTS (62 aa).

In terms of assembly, may form homomeric filament after self-association or heteromeric filament after association with beta-tectorin. Post-translationally, at least 3 products of tectorin seem to exist: HMM, MMM and LMM. They may be generated by active processing or the result of proteolysis occurring between intrachain disulfide bonds. In terms of processing, the presence of a hydrophobic C-terminus preceded by a potential cleavage site strongly suggests that tectorins are synthesized as glycosylphosphatidylinositol-linked, membrane-bound precursors. Tectorins are targeted to the apical surface of the inner ear epithelia by the lipid and proteolytically released into the extracellular compartment. As to expression, expressed in the inner ear.

It localises to the cell membrane. It is found in the secreted. The protein localises to the extracellular space. The protein resides in the extracellular matrix. Its function is as follows. One of the major non-collagenous components of the tectorial membrane. The tectorial membrane is an extracellular matrix of the inner ear that covers the neuroepithelium of the cochlea and contacts the stereocilia bundles of specialized sensory hair cells. Sound induces movement of these hair cells relative to the tectorial membrane, deflects the stereocilia and leads to fluctuations in hair-cell membrane potential, transducing sound into electrical signals. The protein is Alpha-tectorin (TECTA) of Gallus gallus (Chicken).